We begin with the raw amino-acid sequence, 410 residues long: Argininosuccinate synthase (410 aa).

Residues 10-18 and alanine 37 contribute to the ATP site; that span reads AYSGGLDTS. Residues tyrosine 90 and serine 95 each coordinate L-citrulline. Glycine 120 contacts ATP. L-aspartate is bound by residues threonine 122, asparagine 126, and aspartate 127. Asparagine 126 is a binding site for L-citrulline. The L-citrulline site is built by arginine 130, serine 182, serine 191, glutamate 267, and tyrosine 279.

This sequence belongs to the argininosuccinate synthase family. Type 1 subfamily. Homotetramer.

Its subcellular location is the cytoplasm. The catalysed reaction is L-citrulline + L-aspartate + ATP = 2-(N(omega)-L-arginino)succinate + AMP + diphosphate + H(+). Its pathway is amino-acid biosynthesis; L-arginine biosynthesis; L-arginine from L-ornithine and carbamoyl phosphate: step 2/3. The protein is Argininosuccinate synthase of Polynucleobacter asymbioticus (strain DSM 18221 / CIP 109841 / QLW-P1DMWA-1) (Polynucleobacter necessarius subsp. asymbioticus).